A 31-amino-acid polypeptide reads, in one-letter code: Cycloviolacin-O25 (31 aa).

The segment at residues 1-31 is a cross-link (cyclopeptide (Asp-Asn)); sequence DIFCGETCAFIPCITHVPGTCSCKSKVCYFN. Cystine bridges form between cysteine 4/cysteine 21, cysteine 8/cysteine 23, and cysteine 13/cysteine 28.

In terms of processing, this is a cyclic peptide. Expressed in roots and runners but not in leaves, petals and petioles (at protein level).

In terms of biological role, probably participates in a plant defense mechanism. This is Cycloviolacin-O25 from Viola odorata (Sweet violet).